Here is a 220-residue protein sequence, read N- to C-terminus: Cytidylate kinase (220 aa).

Residue 10–18 (GPASSGKST) participates in ATP binding.

The protein belongs to the cytidylate kinase family. Type 1 subfamily.

The protein localises to the cytoplasm. The enzyme catalyses CMP + ATP = CDP + ADP. It carries out the reaction dCMP + ATP = dCDP + ADP. In Lactococcus lactis subsp. cremoris (strain MG1363), this protein is Cytidylate kinase.